The chain runs to 647 residues: 2',3'-cyclic-nucleotide 2'-phosphodiesterase/3'-nucleotidase (647 aa).

A signal peptide spans 1 to 19; that stretch reads MIKFSATLLATLIAASVNA. Positions 31, 33, 76, 116, 225, 257, and 259 each coordinate a divalent metal cation. Substrate contacts are provided by residues Tyr440 and 544 to 550; that span reads YRAYGGK.

It belongs to the 5'-nucleotidase family. A divalent metal cation is required as a cofactor.

The protein resides in the periplasm. It catalyses the reaction a nucleoside 2',3'-cyclic phosphate + H2O = a nucleoside 3'-phosphate + H(+). The catalysed reaction is a ribonucleoside 3'-phosphate + H2O = a ribonucleoside + phosphate. Its function is as follows. This bifunctional enzyme catalyzes two consecutive reactions during ribonucleic acid degradation. Converts a 2',3'-cyclic nucleotide to a 3'-nucleotide and then the 3'-nucleotide to the corresponding nucleoside and phosphate. This chain is 2',3'-cyclic-nucleotide 2'-phosphodiesterase/3'-nucleotidase (cpdB), found in Salmonella typhimurium (strain LT2 / SGSC1412 / ATCC 700720).